Here is a 220-residue protein sequence, read N- to C-terminus: Cytidylate kinase (220 aa).

G9–T17 provides a ligand contact to ATP.

This sequence belongs to the cytidylate kinase family. Type 1 subfamily.

The protein localises to the cytoplasm. It carries out the reaction CMP + ATP = CDP + ADP. The enzyme catalyses dCMP + ATP = dCDP + ADP. The protein is Cytidylate kinase of Thermotoga maritima (strain ATCC 43589 / DSM 3109 / JCM 10099 / NBRC 100826 / MSB8).